The sequence spans 569 residues: Intraflagellar transport protein 74/72 (569 aa).

Coiled-coil stretches lie at residues 75 to 156 (ITAT…TRNE), 201 to 231 (YRSL…VAAN), and 271 to 298 (AITL…AESH).

Belongs to the IFT74 family.

It is found in the cell projection. It localises to the cilium. Its subcellular location is the flagellum. The protein localises to the cytoplasm. The protein resides in the cytoskeleton. It is found in the flagellum axoneme. It localises to the flagellum basal body. Functionally, component of the intraflagellar transport complex B (IFT-B) involved in flagellar assembly. The chain is Intraflagellar transport protein 74/72 from Giardia intestinalis (strain ATCC 50803 / WB clone C6) (Giardia lamblia).